The sequence spans 380 residues: N-acetylaspartylglutamate synthase A (380 aa).

In terms of domain architecture, ATP-grasp spans phenylalanine 115–methionine 300. ATP-binding positions include lysine 154, glutamine 189–aspartate 199, and arginine 215. 3 residues coordinate Mg(2+): aspartate 260, glutamate 273, and asparagine 275. The Mn(2+) site is built by aspartate 260, glutamate 273, and asparagine 275. Serine 319 carries the phosphoserine modification. Positions glycine 345 to proline 370 are disordered.

Belongs to the RimK family. It depends on Mg(2+) as a cofactor. Mn(2+) serves as cofactor. In terms of tissue distribution, highly expressed in spinal cord and brain.

The protein localises to the cytoplasm. The enzyme catalyses N-acetyl-L-aspartate + L-glutamate + ATP = N-acetyl-L-aspartyl-L-glutamate + ADP + phosphate + H(+). The catalysed reaction is N-acetyl-L-aspartate + 2 L-glutamate + 2 ATP = N-acetyl-L-aspartyl-L-glutamyl-L-glutamate + 2 ADP + 2 phosphate + 2 H(+). In terms of biological role, catalyzes the synthesis of N-acetyl-L-aspartyl-L-glutamate (NAAG) and N-acetyl-L-aspartyl-L-glutamyl-L-glutamate. This Mus musculus (Mouse) protein is N-acetylaspartylglutamate synthase A (Rimkla).